A 710-amino-acid polypeptide reads, in one-letter code: Interleukin-1 receptor-associated kinase 1 (710 aa).

The 80-residue stretch at 27 to 106 (MCRFYKVMDA…DIITAWHPPA (80 aa)) folds into the Death domain. Thr66 bears the Phosphothreonine; by PKC/PRKCI mark. The disordered stretch occupies residues 107–133 (PVVPPSTAAPRPSSISAGSEAGDWSPR). Residues 110–211 (PPSTAAPRPS…FCEISQGTCN (102 aa)) are proST region. Residues 111–123 (PSTAAPRPSSISA) show a composition bias toward low complexity. Ser131 bears the Phosphoserine mark. Glycyl lysine isopeptide (Lys-Gly) (interchain with G-Cter in ubiquitin) cross-links involve residues Lys134 and Lys180. The interval 169–190 (PPLPSSAPSSTKSSPESPVSGL) is disordered. Residues 174–188 (SAPSSTKSSPESPVS) are compositionally biased toward low complexity. Phosphothreonine; by IRAK4 is present on Thr209. A Protein kinase domain is found at 212-521 (FSEELRIGEG…TQVYKRLEGL (310 aa)). ATP-binding positions include 218-226 (IGEGGFGCV) and Lys239. Asp340 functions as the Proton acceptor in the catalytic mechanism. Residues 342 to 345 (KSSN) and Asp358 contribute to the ATP site. Ser375 bears the Phosphoserine mark. Thr387 carries the post-translational modification Phosphothreonine. Disordered stretches follow at residues 527–655 (WELE…SEPP) and 689–710 (FPGL…EFQS). The span at 537 to 553 (PSPQENSYMSTTGSAQS) shows a compositional bias: polar residues. Ser553 carries the phosphoserine modification. Positions 567-576 (APAQAAQQLQ) are enriched in low complexity. Positions 616 to 639 (SCTQGGTTRESSVRSSPGFQPTTM) are enriched in polar residues. The segment covering 640–654 (EGSPTGSSSLLSSEP) has biased composition (low complexity).

Belongs to the protein kinase superfamily. TKL Ser/Thr protein kinase family. Pelle subfamily. As to quaternary structure, homodimer. Forms a complex with TRAF6, PELI1, IRAK4 and MYD88. Direct binding of SMAD6 to PELI1 prevents complex formation and hence negatively regulates IL1R-TLR signaling and eventually NF-kappa-B-mediated gene expression. The TRAF6-PELI1-IRAK4-MYD88 complex recruits MAP3K7/TAK1, TAB1 and TAB2 to mediate NF-kappa-B activation. Interaction with MYD88 recruits IRAK1 to the stimulated receptor complex. Interacts with TOLLIP; this interaction occurs in the cytosol prior to receptor activation. Interacts with IL1RL1. Interacts (when polyubiquitinated) with IKBKG/NEMO. Interacts with RSAD2/viperin. Interacts with IRAK1BP1. Interacts with PELI2. Interacts with ZC3H12A; this interaction increases the interaction between ZC3H12A and IKBKB/IKKB. Interacts with IRAK4. Interacts with PELI3. Interacts with PELI1 and TRAF6. Interacts with INAVA; the interaction takes place upon PRR stimulation. Interacts (via C-terminus) with NFATC4 (via N-terminus). Requires Mg(2+) as cofactor. Following recruitment on the activated receptor complex, phosphorylated on Thr-209, probably by IRAK4, resulting in a conformational change of the kinase domain, allowing further phosphorylations to take place. Thr-387 phosphorylation in the activation loop is required to achieve full enzymatic activity. Post-translationally, polyubiquitinated by TRAF6 after cell stimulation with IL-1-beta by PELI1, PELI2 and PELI3. Polyubiquitination occurs with polyubiquitin chains linked through 'Lys-63'. Ubiquitination promotes interaction with NEMO/IKBKG. Also sumoylated; leading to nuclear translocation. Highly expressed in liver, followed by kidney and skeletal muscle.

The protein resides in the cytoplasm. It localises to the nucleus. Its subcellular location is the lipid droplet. The catalysed reaction is L-seryl-[protein] + ATP = O-phospho-L-seryl-[protein] + ADP + H(+). It carries out the reaction L-threonyl-[protein] + ATP = O-phospho-L-threonyl-[protein] + ADP + H(+). Functionally, serine/threonine-protein kinase that plays a critical role in initiating innate immune response against foreign pathogens. Involved in Toll-like receptor (TLR) and IL-1R signaling pathways. Is rapidly recruited by MYD88 to the receptor-signaling complex upon TLR activation. Association with MYD88 leads to IRAK1 phosphorylation by IRAK4 and subsequent autophosphorylation and kinase activation. Phosphorylates E3 ubiquitin ligases Pellino proteins (PELI1, PELI2 and PELI3) to promote pellino-mediated polyubiquitination of IRAK1. Then, the ubiquitin-binding domain of IKBKG/NEMO binds to polyubiquitinated IRAK1 bringing together the IRAK1-MAP3K7/TAK1-TRAF6 complex and the NEMO-IKKA-IKKB complex. In turn, MAP3K7/TAK1 activates IKKs (CHUK/IKKA and IKBKB/IKKB) leading to NF-kappa-B nuclear translocation and activation. Alternatively, phosphorylates TIRAP to promote its ubiquitination and subsequent degradation. Phosphorylates the interferon regulatory factor 7 (IRF7) to induce its activation and translocation to the nucleus, resulting in transcriptional activation of type I IFN genes, which drive the cell in an antiviral state. When sumoylated, translocates to the nucleus and phosphorylates STAT3. In Mus musculus (Mouse), this protein is Interleukin-1 receptor-associated kinase 1 (Irak1).